Reading from the N-terminus, the 294-residue chain is Acetylglutamate kinase (294 aa).

Residues 63–64 (GG), R85, and N188 contribute to the substrate site.

The protein belongs to the acetylglutamate kinase family. ArgB subfamily.

The protein localises to the cytoplasm. It catalyses the reaction N-acetyl-L-glutamate + ATP = N-acetyl-L-glutamyl 5-phosphate + ADP. The protein operates within amino-acid biosynthesis; L-arginine biosynthesis; N(2)-acetyl-L-ornithine from L-glutamate: step 2/4. In terms of biological role, catalyzes the ATP-dependent phosphorylation of N-acetyl-L-glutamate. The sequence is that of Acetylglutamate kinase from Methanococcus maripaludis (strain C7 / ATCC BAA-1331).